Consider the following 164-residue polypeptide: Ribosome maturation factor RimM (164 aa).

The PRC barrel domain occupies 93-164 (DSEYYVANLN…FVVIVPPEFI (72 aa)).

Belongs to the RimM family. In terms of assembly, binds ribosomal protein uS19.

It is found in the cytoplasm. Functionally, an accessory protein needed during the final step in the assembly of 30S ribosomal subunit, possibly for assembly of the head region. Essential for efficient processing of 16S rRNA. May be needed both before and after RbfA during the maturation of 16S rRNA. It has affinity for free ribosomal 30S subunits but not for 70S ribosomes. This Orientia tsutsugamushi (strain Boryong) (Rickettsia tsutsugamushi) protein is Ribosome maturation factor RimM.